The primary structure comprises 350 residues: Inhibin beta E chain (350 aa).

Residues 1 to 19 form the signal peptide; sequence MRLPDVQLWLVLLWALVRA. Residues 20–236 constitute a propeptide that is removed on maturation; sequence QGTGSVCPSC…EPGAGRARRR (217 aa). An N-linked (GlcNAc...) asparagine glycan is attached at N198. 4 disulfide bridges follow: C240/C248, C247/C315, C276/C347, and C280/C349.

The protein belongs to the TGF-beta family. Homodimeric or heterodimeric through association with alpha and beta subunits, linked by one or more disulfide bonds. Inhibins are heterodimers of one alpha and one beta subunit. Activins are homo- or heterodimers of beta subunits only.

Its subcellular location is the secreted. In terms of biological role, inhibins and activins inhibit and activate, respectively, the secretion of follitropin by the pituitary gland. Inhibins/activins are involved in regulating a number of diverse functions such as hypothalamic and pituitary hormone secretion, gonadal hormone secretion, germ cell development and maturation, erythroid differentiation, insulin secretion, nerve cell survival, embryonic axial development or bone growth, depending on their subunit composition. Inhibins appear to oppose the functions of activins. Its function is as follows. Activin E is a homodimer of INHBE secreted by the liver that plays a crucial role in regulating metabolic homeostasis particularly in lipid metabolism and energy homeostasis. Plays a central role in the regulation of adipose tissue lipolysis by preventing the influx of fatty acids from adipose tissue into the liver. Mechanistically, signals via ACVR1C to activate SMAD2/3 signaling, suppressing PPARG target genes in adipose tissue, thereby reducing liver lipid content and improving glycemic control. Induces beige adipocyte formation and thermogenesis in response to cold exposure. The sequence is that of Inhibin beta E chain (INHBE) from Homo sapiens (Human).